Consider the following 171-residue polypeptide: Large ribosomal subunit protein uL10 (171 aa).

This sequence belongs to the universal ribosomal protein uL10 family. In terms of assembly, part of the ribosomal stalk of the 50S ribosomal subunit. The N-terminus interacts with L11 and the large rRNA to form the base of the stalk. The C-terminus forms an elongated spine to which L12 dimers bind in a sequential fashion forming a multimeric L10(L12)X complex.

Functionally, forms part of the ribosomal stalk, playing a central role in the interaction of the ribosome with GTP-bound translation factors. The polypeptide is Large ribosomal subunit protein uL10 (Corynebacterium glutamicum (strain ATCC 13032 / DSM 20300 / JCM 1318 / BCRC 11384 / CCUG 27702 / LMG 3730 / NBRC 12168 / NCIMB 10025 / NRRL B-2784 / 534)).